A 1048-amino-acid polypeptide reads, in one-letter code: Putative truncated guanine nucleotide exchange factor SDC25 (1048 aa).

Disordered stretches follow at residues 208–242 (SKQGTSCSSETSHHSPSAPFQRRRRGTIFSNVSGS) and 419–444 (LNLDNAKDKKNGSQNTDIQEEEDEYE). Over residues 212-224 (TSCSSETSHHSPS) the composition is skewed to low complexity. Residues 578 to 710 (SNNRIKGGSK…LLKEVNQKFK (133 aa)) enclose the N-terminal Ras-GEF domain. The Ras-GEF domain maps to 748–995 (DPVLFATQLT…YQLSLIIEPK (248 aa)). Residues 997-1048 (RKKVVPNSNSNNKSQEKSRDDQTDEGKTSTKKDRFPKFQLHKTKKKAPKVSK) form a disordered region. Positions 1010-1032 (SQEKSRDDQTDEGKTSTKKDRFP) are enriched in basic and acidic residues. The span at 1035 to 1048 (QLHKTKKKAPKVSK) shows a compositional bias: basic residues.

Functionally, promotes the exchange of Ras-bound GDP by GTP. This Saccharomyces cerevisiae (strain ATCC 204508 / S288c) (Baker's yeast) protein is Putative truncated guanine nucleotide exchange factor SDC25 (SDC25).